The sequence spans 156 residues: Transcription elongation factor GreA (156 aa).

Residues 2–27 (EKTFPMTKEGLDKLKAELENLKLVKR) adopt a coiled-coil conformation.

It belongs to the GreA/GreB family.

Necessary for efficient RNA polymerase transcription elongation past template-encoded arresting sites. The arresting sites in DNA have the property of trapping a certain fraction of elongating RNA polymerases that pass through, resulting in locked ternary complexes. Cleavage of the nascent transcript by cleavage factors such as GreA or GreB allows the resumption of elongation from the new 3'terminus. GreA releases sequences of 2 to 3 nucleotides. This is Transcription elongation factor GreA from Lactococcus lactis subsp. cremoris (strain MG1363).